The primary structure comprises 398 residues: MATTLATDVRLSIAHQTRFALRLASTISSNPKSAASNAVFSPVSLHVALSLLAAGAGSATRDQLVATLGTGEVEGLHALAEQVVQFVLADASSAGGPHVAFANGVFVDASLPLKPSFQELAVCKYKADTQSVDFQTKAAEVATQVNSWVEKVTSGRIKDILPSGSVDNTTKLVLANALYFKGAWTDQFDSSGTKNDYFYLPDGSSVQTPFMSSMDDQYLSSSDGLKVLKLPYKQGGDKRQFSMYILLPEAPGGLSNLAEKLSAEPDFLERHIPRQRVALRQFKLPKFKISFETEASDLLKCLGLQLPFSNEADFSEMVDSPMAHGLRVSSVFHQAFVEVNEQGTEAAASTAIKMALLQARPPSVMDFIADHPFLFLLREDISGVVLFMGHVVNPLLSS.

The interval 343–367 (GTEAAASTAIKMALLQARPPSVMDF) is RCL.

Belongs to the serpin family.

In terms of biological role, inhibits chymotrypsin and cathepsin G in vitro. The chain is Serpin-Z1C from Triticum aestivum (Wheat).